The sequence spans 306 residues: Ribonuclease Z (306 aa).

Residues His63, His65, Asp67, His68, His141, Asp211, and His269 each coordinate Zn(2+). The active-site Proton acceptor is the Asp67.

This sequence belongs to the RNase Z family. As to quaternary structure, homodimer. The cofactor is Zn(2+).

It carries out the reaction Endonucleolytic cleavage of RNA, removing extra 3' nucleotides from tRNA precursor, generating 3' termini of tRNAs. A 3'-hydroxy group is left at the tRNA terminus and a 5'-phosphoryl group is left at the trailer molecule.. Zinc phosphodiesterase, which displays some tRNA 3'-processing endonuclease activity. Probably involved in tRNA maturation, by removing a 3'-trailer from precursor tRNA. The protein is Ribonuclease Z of Staphylococcus saprophyticus subsp. saprophyticus (strain ATCC 15305 / DSM 20229 / NCIMB 8711 / NCTC 7292 / S-41).